The primary structure comprises 371 residues: uncharacterized protein (371 aa).

The segment at lysine 339–histidine 371 is disordered.

This is an uncharacterized protein from Escherichia coli (strain K12).